The primary structure comprises 488 residues: Altronate oxidoreductase (488 aa).

Position 18 to 29 (valine 18 to alanine 29) interacts with NAD(+).

Belongs to the mannitol dehydrogenase family. UxaB subfamily.

It catalyses the reaction D-altronate + NAD(+) = keto-D-tagaturonate + NADH + H(+). It functions in the pathway carbohydrate metabolism; pentose and glucuronate interconversion. This Pectobacterium atrosepticum (strain SCRI 1043 / ATCC BAA-672) (Erwinia carotovora subsp. atroseptica) protein is Altronate oxidoreductase.